The following is a 139-amino-acid chain: MLMPKRVKYRKTQRGRMKGNSGRGTDVSFGSFGLKAIEPAWITSRQIEAARVAMTRFMKRDGKIWIRIFPDKPVTKKPAETRMGSGKGSPEFWVAVVKPGRIMFEADGVPKEVATEAFRLAAKKLPIKTRFIVRPDYED.

Positions 1-17 (MLMPKRVKYRKTQRGRM) are enriched in basic residues. The interval 1-24 (MLMPKRVKYRKTQRGRMKGNSGRG) is disordered.

The protein belongs to the universal ribosomal protein uL16 family. In terms of assembly, part of the 50S ribosomal subunit.

Binds 23S rRNA and is also seen to make contacts with the A and possibly P site tRNAs. The protein is Large ribosomal subunit protein uL16 of Pelodictyon phaeoclathratiforme (strain DSM 5477 / BU-1).